The chain runs to 259 residues: Phosphate import ATP-binding protein PstB (259 aa).

The ABC transporter domain occupies 13–254 (LEVNNLNFHY…PRLQRTEDYI (242 aa)). 45-52 (GPSGCGKS) is a binding site for ATP.

Belongs to the ABC transporter superfamily. Phosphate importer (TC 3.A.1.7) family. As to quaternary structure, the complex is composed of two ATP-binding proteins (PstB), two transmembrane proteins (PstC and PstA) and a solute-binding protein (PstS).

It is found in the cell inner membrane. It catalyses the reaction phosphate(out) + ATP + H2O = ADP + 2 phosphate(in) + H(+). Functionally, part of the ABC transporter complex PstSACB involved in phosphate import. Responsible for energy coupling to the transport system. This Pasteurella multocida (strain Pm70) protein is Phosphate import ATP-binding protein PstB.